Reading from the N-terminus, the 178-residue chain is Endothelin-2 (178 aa).

Residues 1 to 26 form the signal peptide; sequence MVAMPTAWCSIALALLLALHEGKGQV. The propeptide occupies 27–46; that stretch reads AAAPDQPAPSHRARASHLRP. Disulfide bonds link Cys-49/Cys-63 and Cys-51/Cys-59. Residues 70–178 constitute a propeptide that is removed on maturation; the sequence is VNTPGQTAPY…RPTHSRRWKR (109 aa). The tract at residues 96–111 is endothelin-like; sequence CECSSGRDPACATFCH.

Belongs to the endothelin/sarafotoxin family.

The protein localises to the secreted. In terms of biological role, endothelins are endothelium-derived vasoconstrictor peptides. This Felis catus (Cat) protein is Endothelin-2 (EDN2).